The chain runs to 170 residues: Ribosome maturation factor RimM (170 aa).

A PRC barrel domain is found at 98–170 (PDEYYWVDLE…RIVVDWDPEF (73 aa)).

This sequence belongs to the RimM family. Binds ribosomal protein uS19.

It is found in the cytoplasm. Functionally, an accessory protein needed during the final step in the assembly of 30S ribosomal subunit, possibly for assembly of the head region. Essential for efficient processing of 16S rRNA. May be needed both before and after RbfA during the maturation of 16S rRNA. It has affinity for free ribosomal 30S subunits but not for 70S ribosomes. The polypeptide is Ribosome maturation factor RimM (Xylella fastidiosa (strain 9a5c)).